Here is a 503-residue protein sequence, read N- to C-terminus: Maturase K (503 aa).

Belongs to the intron maturase 2 family. MatK subfamily.

It is found in the plastid. It localises to the chloroplast. Usually encoded in the trnK tRNA gene intron. Probably assists in splicing its own and other chloroplast group II introns. The polypeptide is Maturase K (Psilotum nudum (Whisk fern)).